A 212-amino-acid chain; its full sequence is Fe/S biogenesis protein NfuA (212 aa).

Residues cysteine 169 and cysteine 172 each contribute to the [4Fe-4S] cluster site.

The protein belongs to the NfuA family. As to quaternary structure, homodimer. [4Fe-4S] cluster serves as cofactor.

Functionally, involved in iron-sulfur cluster biogenesis. Binds a 4Fe-4S cluster, can transfer this cluster to apoproteins, and thereby intervenes in the maturation of Fe/S proteins. Could also act as a scaffold/chaperone for damaged Fe/S proteins. This Acinetobacter baylyi (strain ATCC 33305 / BD413 / ADP1) protein is Fe/S biogenesis protein NfuA.